The chain runs to 137 residues: Large ribosomal subunit protein uL16 (137 aa).

Over residues M1 to N17 the composition is skewed to basic residues. Residues M1–Q22 are disordered.

Belongs to the universal ribosomal protein uL16 family. In terms of assembly, part of the 50S ribosomal subunit.

Binds 23S rRNA and is also seen to make contacts with the A and possibly P site tRNAs. The protein is Large ribosomal subunit protein uL16 of Teredinibacter turnerae (strain ATCC 39867 / T7901).